Reading from the N-terminus, the 312-residue chain is Aspartate carbamoyltransferase catalytic subunit (312 aa).

Carbamoyl phosphate-binding residues include arginine 55 and threonine 56. Residue lysine 83 coordinates L-aspartate. The carbamoyl phosphate site is built by arginine 105, histidine 138, and glutamine 141. Residues arginine 171 and arginine 225 each contribute to the L-aspartate site. Residues glycine 266 and proline 267 each contribute to the carbamoyl phosphate site.

It belongs to the aspartate/ornithine carbamoyltransferase superfamily. ATCase family. In terms of assembly, heterododecamer (2C3:3R2) of six catalytic PyrB chains organized as two trimers (C3), and six regulatory PyrI chains organized as three dimers (R2).

It catalyses the reaction carbamoyl phosphate + L-aspartate = N-carbamoyl-L-aspartate + phosphate + H(+). It functions in the pathway pyrimidine metabolism; UMP biosynthesis via de novo pathway; (S)-dihydroorotate from bicarbonate: step 2/3. Catalyzes the condensation of carbamoyl phosphate and aspartate to form carbamoyl aspartate and inorganic phosphate, the committed step in the de novo pyrimidine nucleotide biosynthesis pathway. In Corynebacterium efficiens (strain DSM 44549 / YS-314 / AJ 12310 / JCM 11189 / NBRC 100395), this protein is Aspartate carbamoyltransferase catalytic subunit.